The primary structure comprises 465 residues: Cysteine--tRNA ligase (465 aa).

Position 30 (C30) interacts with Zn(2+). Residues 32–42 (MTVYDYCHVGH) carry the 'HIGH' region motif. Zn(2+) contacts are provided by C214, H239, and E243. The short motif at 271–275 (KMSKS) is the 'KMSKS' region element. K274 contacts ATP.

This sequence belongs to the class-I aminoacyl-tRNA synthetase family. In terms of assembly, monomer. Zn(2+) serves as cofactor.

The protein localises to the cytoplasm. It carries out the reaction tRNA(Cys) + L-cysteine + ATP = L-cysteinyl-tRNA(Cys) + AMP + diphosphate. The protein is Cysteine--tRNA ligase of Ralstonia nicotianae (strain ATCC BAA-1114 / GMI1000) (Ralstonia solanacearum).